A 1280-amino-acid polypeptide reads, in one-letter code: MTKKIKLSNSESNKVNNNNNNNHGNGHNHNHSHNHGEMCHGHGIIGIVDSVTGENIIQVNGENLRSVPNGHSLIHNINSIINSHSKHGKIKNILKDSTIISSSINLSDKPINKITEENSPPSSPTLSSSTNTTTDRQELPQQQQQPQQQQSQPSTPPPQQQTNQKQQPEFNRYQANDILFRNKLTRSLSRNIPPLSLLKQNFKDEMENSFHTAISNIKDLNEKVEMVNLIFQHNLSENNAMVNVDSIIHSSTSGLLSEYKQITETFDWEQTSKGYKNKGNELFQKKQYSDALLLYNESLRIYDMELAAAATSTNLNEKENGGGGNVGGSATATATTINTPDVSILSSIHSNRCLCLVNLERYKEGAIEATRGIDLVGSSSVLHKLYYRRGICYYHLRKHYKAKKDFLRAHTLIEKRDSSDLASIENYLFKIQKLSLPLQKDEEIEQELDNKNNNSNDDEKQQQQQQQQDIDVTISSILEKSESLIDSRVEFLYQSDLVGRISEASDFIPSNTVLYQEEPYVSCLDRNYHSQYCYNCFKEILSPIYCKECSNSQYCSNKCLNEDYVKQHGRECGKGFLIICSHESLLVIRLLARKGRDYREANKGKKEEEPQQQQQKQQKSRKLPNLTFIPKPNPTQIDQNLNKPKIVLPEPTTAAINTALSSASTPTTATATTTTTTTTATTPTTLAETLSSTSLTENKSDSTPPPTPLPPSSSSSSSSSSSTTTTTFSFNMSELQNLQISQDDELFDVPTDPALFGKSNTYSQSYELINSFNPHFEHHSNDSMANMIFDAFVIERFLLYYQKDLGILSEDIDVHVILRHLCQLTTYTFAIPGYIDNHDSLVLKTLQLQQQQQQQQQQQQNQQSNQQPNQQSNQQSNQQSNQQSQPNQSPIIQSQNPPHASPFSPLRYSVQKYSQDKIGYAVYPMASLMNHSCDNNTHLQYDGCSLTIKSLFNIEKGEEILGCYGPHAFLNPLKDRLINLYNEFFFVCRCKACSEKSGPDPIKCPGSYHDHLNSPESSPVECSGTLLESINMNQLVTMAKLQQQQQQQQQHQQQNDKKKFNSNPTNLGSNNNNNYLNNNFNNPLRNGNPFLLKQTYDRYDDHEHRYFCCSKCGIELNGFDSFSLTSQIIISDNLFEMGFKAMTLYGNLSKDIETMLLRALELRKSIFKPCSKKIGDIYDSLSRFSISREDGASAAKYLELLIENVISRLGHSNSADLGREYSKLGQIYLTLGEIEKSEDAIEKAESILMSWKSNDPTDEEVLFLLTNRRKLFTAAHLINK.

Disordered regions lie at residues 1 to 35 (MTKKIKLSNSESNKVNNNNNNNHGNGHNHNHSHNH) and 111 to 167 (INKI…QKQQ). Low complexity-rich tracts occupy residues 16–25 (NNNNNNNHGN) and 117–153 (ENSPPSSPTLSSSTNTTTDRQELPQQQQQPQQQQSQP). TPR repeat units follow at residues 272–305 (SKGYKNKGNELFQKKQYSDALLLYNESLRIYDME) and 383–416 (HKLYYRRGICYYHLRKHYKAKKDFLRAHTLIEKR). Positions 439-468 (QKDEEIEQELDNKNNNSNDDEKQQQQQQQQ) form a coiled coil. Residues Cys533, Cys536, Cys546, Cys549, Cys555, Cys559, His568, and Cys572 each contribute to the Zn(2+) site. The MYND-type zinc finger occupies 533–572 (CYNCFKEILSPIYCKECSNSQYCSNKCLNEDYVKQHGREC). Disordered stretches follow at residues 601-642 (ANKG…QNLN), 659-726 (ALSS…TTTT), 854-905 (QQQQ…PFSP), and 1039-1079 (AKLQ…LNNN). 5 stretches are compositionally biased toward low complexity: residues 659–697 (ALSSASTPTTATATTTTTTTTATTPTTLAETLSSTSLTE), 712–726 (SSSSSSSSSSSTTTT), 854–898 (QQQQ…QNPP), 1042–1053 (QQQQQQQQQHQQ), and 1061–1079 (NSNPTNLGSNNNNNYLNNN). An SET domain is found at 822–965 (CQLTTYTFAI…KGEEILGCYG (144 aa)). The stretch at 1218–1251 (GREYSKLGQIYLTLGEIEKSEDAIEKAESILMSW) is one TPR 3 repeat.

Belongs to the class V-like SAM-binding methyltransferase superfamily.

Functionally, probable methyltransferase. The sequence is that of SET and MYND domain-containing protein DDB_G0284059 from Dictyostelium discoideum (Social amoeba).